Here is a 147-residue protein sequence, read N- to C-terminus: Globin (147 aa).

The Globin domain maps to 2-147 (SFSAAQVDTV…SVANGIGQYQ (146 aa)). Heme b-binding residues include His64 and His95.

It belongs to the globin family. As to quaternary structure, homodimer or homooligomer.

The chain is Globin from Aequiyoldia eightsii (Antarctic yoldia).